An 801-amino-acid polypeptide reads, in one-letter code: Elongation factor G, mitochondrial (801 aa).

A mitochondrion-targeting transit peptide spans 1-24 (MRCPSLARLPHRAISGLTRLPVRL). In terms of domain architecture, tr-type G spans 99-386 (SRIRNIGIAA…GVIDYLPNPS (288 aa)). Residues 108 to 115 (AHIDSGKT), 184 to 188 (DTPGH), and 238 to 241 (NKMD) each bind GTP.

It belongs to the TRAFAC class translation factor GTPase superfamily. Classic translation factor GTPase family. EF-G/EF-2 subfamily.

It localises to the mitochondrion. It participates in protein biosynthesis; polypeptide chain elongation. Functionally, mitochondrial GTPase that catalyzes the GTP-dependent ribosomal translocation step during translation elongation. During this step, the ribosome changes from the pre-translocational (PRE) to the post-translocational (POST) state as the newly formed A-site-bound peptidyl-tRNA and P-site-bound deacylated tRNA move to the P and E sites, respectively. Catalyzes the coordinated movement of the two tRNA molecules, the mRNA and conformational changes in the ribosome. The polypeptide is Elongation factor G, mitochondrial (mef1) (Aspergillus clavatus (strain ATCC 1007 / CBS 513.65 / DSM 816 / NCTC 3887 / NRRL 1 / QM 1276 / 107)).